The chain runs to 289 residues: ATP synthase gamma chain (289 aa).

Belongs to the ATPase gamma chain family. As to quaternary structure, F-type ATPases have 2 components, CF(1) - the catalytic core - and CF(0) - the membrane proton channel. CF(1) has five subunits: alpha(3), beta(3), gamma(1), delta(1), epsilon(1). CF(0) has three main subunits: a, b and c.

Its subcellular location is the cell membrane. Its function is as follows. Produces ATP from ADP in the presence of a proton gradient across the membrane. The gamma chain is believed to be important in regulating ATPase activity and the flow of protons through the CF(0) complex. The chain is ATP synthase gamma chain from Hamiltonella defensa subsp. Acyrthosiphon pisum (strain 5AT).